We begin with the raw amino-acid sequence, 1310 residues long: Adhesion G protein-coupled receptor A3 (1310 aa).

Residues 1–27 form the signal peptide; the sequence is MEPPPPLLLLPLALLALLWGGERGAAA. The region spanning 28 to 70 is the LRRNT domain; that stretch reads LPAGCKHDGRARGTGRAAAAAEGKVVCSSLELAQVLPPDTLPN. Residues 28 to 747 lie on the Extracellular side of the membrane; it reads LPAGCKHDGR…TELYTPAASL (720 aa). Asn-70 and Asn-87 each carry an N-linked (GlcNAc...) asparagine glycan. LRR repeat units follow at residues 71-92, 95-116, 119-140, and 143-164; these read RTVT…SFSG, LLER…AFWG, SLKR…VFRG, and NLVR…TFDY. Residues Asn-148, Asn-195, Asn-290, Asn-321, Asn-422, Asn-442, Asn-581, Asn-641, Asn-676, and Asn-717 are each glycosylated (N-linked (GlcNAc...) asparagine). An LRRCT domain is found at 176–226; it reads EYLLCDCNILWMHRWVKERNITVRDTRCVYPKSLQAQPVTGVKQELLTCDP. Residues 231-329 enclose the Ig-like domain; sequence PSFYMTPSHR…GNNTRTVDIV (99 aa). Cys-253 and Cys-313 are oxidised to a cystine. The GAIN-B domain maps to 572 to 739; the sequence is LDKQLSFKCN…AVLMDLTGTE (168 aa). The tract at residues 690 to 739 is GPS; that stretch reads AAQWDFDLLNGQGGWKSDGCCILYSDENITTIQCGSLGNYAVLMDLTGTE. An intrachain disulfide couples Cys-709 to Cys-723. Residues 748–768 form a helical membrane-spanning segment; that stretch reads LHPVVYTTAITLLLCLLAVII. The Cytoplasmic segment spans residues 769-785; sequence SYMYHHSLIRISLKSWH. The chain crosses the membrane as a helical span at residues 786 to 806; it reads MLVNLCFHILLTCVVFVGGIT. Residues 807–815 are Extracellular-facing; that stretch reads QTRNASVCQ. N-linked (GlcNAc...) asparagine glycosylation occurs at Asn-810. Residues 816–836 form a helical membrane-spanning segment; the sequence is AVGIILHYSTLATVLWVGVTA. The Cytoplasmic segment spans residues 837–865; the sequence is RNIYKQVTKKAKRCQDPDEPPAPPRPMLR. Residues 866–886 traverse the membrane as a helical segment; the sequence is FYLIGGGIPIIVCGITAAANI. Residues 887-908 are Extracellular-facing; sequence KNYGSRPSAPYCWMAWEPSLGA. The chain crosses the membrane as a helical span at residues 909–929; that stretch reads FYGPASFITFVNCMYFLSIFI. Residues 930–985 lie on the Cytoplasmic side of the membrane; the sequence is QLKRHPERKYELKEPTEEQQRLAANENGEINHQDSMSLSLISTSTLENEHSFQSQL. A helical transmembrane segment spans residues 986 to 1006; it reads LGASLTLLLYVILWMFGAMAV. The Extracellular portion of the chain corresponds to 1007 to 1013; it reads SLYYPLD. Residues 1014–1034 traverse the membrane as a helical segment; sequence LVFSFFFGATCLSFSAFMMVH. Residues 1035–1310 lie on the Cytoplasmic side of the membrane; that stretch reads HCINREDVRL…TGLWKHETTV (276 aa). 3 disordered regions span residues 1065 to 1084, 1187 to 1208, and 1221 to 1264; these read PPNS…SSAE, VEGS…GHSR, and YNPP…ADLE. The segment covering 1222-1239 has biased composition (polar residues); that stretch reads NPPQQDSSDACSTLPKSS. The PDZ-binding signature appears at 1308–1310; it reads TTV.

Belongs to the G-protein coupled receptor 2 family. Adhesion G-protein coupled receptor (ADGR) subfamily. Interacts (via PDZ-binding motif) with DLG1. In terms of tissue distribution, expressed by spermatogonial progenitor cells located within the outer cell layer of the seminiferous tubule and by multipotent adult spermatogonial-derived stem cells.

The protein localises to the membrane. Orphan receptor that may have a role in planar cell polarity pathway. In Mus musculus (Mouse), this protein is Adhesion G protein-coupled receptor A3 (Adgra3).